Reading from the N-terminus, the 379-residue chain is Cobalt-precorrin-5B C(1)-methyltransferase (379 aa).

It belongs to the CbiD family.

It carries out the reaction Co-precorrin-5B + S-adenosyl-L-methionine = Co-precorrin-6A + S-adenosyl-L-homocysteine. It participates in cofactor biosynthesis; adenosylcobalamin biosynthesis; cob(II)yrinate a,c-diamide from sirohydrochlorin (anaerobic route): step 6/10. Its function is as follows. Catalyzes the methylation of C-1 in cobalt-precorrin-5B to form cobalt-precorrin-6A. This is Cobalt-precorrin-5B C(1)-methyltransferase from Salmonella paratyphi B (strain ATCC BAA-1250 / SPB7).